A 494-amino-acid chain; its full sequence is Autocrine proliferation repressor protein A (494 aa).

The first 18 residues, 1-18 (MSKLLILLLLSLVASIFS), serve as a signal peptide directing secretion. N-linked (GlcNAc...) asparagine glycosylation is found at asparagine 37, asparagine 153, and asparagine 302.

The protein belongs to the pqaA family. Interacts with cfaD.

It localises to the secreted. Its function is as follows. Inhibitor that slows proliferation of secreting cells (also known as chalone). May function by binding to cell surface receptors. Requires cfaD for activity. Overexpression slows proliferation. This chain is Autocrine proliferation repressor protein A (aprA), found in Dictyostelium discoideum (Social amoeba).